A 209-amino-acid polypeptide reads, in one-letter code: High frequency lysogenization protein HflD homolog (209 aa).

It belongs to the HflD family.

The protein resides in the cytoplasm. Its subcellular location is the cell inner membrane. The chain is High frequency lysogenization protein HflD homolog from Proteus mirabilis (strain HI4320).